Here is a 643-residue protein sequence, read N- to C-terminus: DNA gyrase subunit B (643 aa).

The Toprim domain maps to 428 to 542 (SEIFLVEGDS…AGYVYIAQPP (115 aa)). 3 residues coordinate Mg(2+): Glu-434, Asp-507, and Asp-509.

The protein belongs to the type II topoisomerase GyrB family. Heterotetramer, composed of two GyrA and two GyrB chains. In the heterotetramer, GyrA contains the active site tyrosine that forms a transient covalent intermediate with DNA, while GyrB binds cofactors and catalyzes ATP hydrolysis. Requires Mg(2+) as cofactor. Mn(2+) serves as cofactor. It depends on Ca(2+) as a cofactor.

It localises to the cytoplasm. The enzyme catalyses ATP-dependent breakage, passage and rejoining of double-stranded DNA.. In terms of biological role, a type II topoisomerase that negatively supercoils closed circular double-stranded (ds) DNA in an ATP-dependent manner to modulate DNA topology and maintain chromosomes in an underwound state. Negative supercoiling favors strand separation, and DNA replication, transcription, recombination and repair, all of which involve strand separation. Also able to catalyze the interconversion of other topological isomers of dsDNA rings, including catenanes and knotted rings. Type II topoisomerases break and join 2 DNA strands simultaneously in an ATP-dependent manner. The protein is DNA gyrase subunit B of Staphylococcus epidermidis (strain ATCC 35984 / DSM 28319 / BCRC 17069 / CCUG 31568 / BM 3577 / RP62A).